Here is a 461-residue protein sequence, read N- to C-terminus: Propanal dehydrogenase (CoA-propanoylating) (461 aa).

The targets protein to the BMC stretch occupies residues 1-18 (MNTSELETLIRNILSEQL).

It belongs to the EutE/PduP family. In terms of assembly, interacts with PduK, probably with its BMC-containing N-terminus. Interacts with shell proteins PduA and PduJ, interacts with PduQ.

The protein resides in the bacterial microcompartment. It carries out the reaction propanal + NAD(+) + CoA = propanoyl-CoA + NADH + H(+). The protein operates within polyol metabolism; 1,2-propanediol degradation. A CoA-acylating aldehyde dehydrogenase required for optimal 1,2-propanediol (1,2-PD) degradation. Optimizes growth in the bacterial microcompartment (BMC) dedicated to 1,2-PD degradation by minimizing propionaldehyde toxicity. NAD(+) and NADH are regenerated internally within the Pdu BMC by the PduP and PduQ enzymes, which reduce NAD(+) and oxidize NADH respectively, although there must also be cofactor transport across the BMC. Directly targeted to the BMC. Functionally, expression of a cosmid containing the full 21-gene pdu operon in E.coli allows E.coli to grow on 1,2-propanediol (1,2-PD) with the appearance of bacterial microcompartments (BMC) in its cytoplasm. Its function is as follows. The 1,2-PD-specific bacterial microcompartment (BMC) concentrates low levels of 1,2-PD catabolic enzymes, concentrates volatile reaction intermediates thus enhancing pathway flux and keeps the level of toxic, mutagenic propionaldehyde low. This is Propanal dehydrogenase (CoA-propanoylating) from Citrobacter freundii.